Here is a 500-residue protein sequence, read N- to C-terminus: Aspartyl/glutamyl-tRNA(Asn/Gln) amidotransferase subunit B (500 aa).

It belongs to the GatB/GatE family. GatB subfamily. Heterotrimer of A, B and C subunits.

The enzyme catalyses L-glutamyl-tRNA(Gln) + L-glutamine + ATP + H2O = L-glutaminyl-tRNA(Gln) + L-glutamate + ADP + phosphate + H(+). It catalyses the reaction L-aspartyl-tRNA(Asn) + L-glutamine + ATP + H2O = L-asparaginyl-tRNA(Asn) + L-glutamate + ADP + phosphate + 2 H(+). Allows the formation of correctly charged Asn-tRNA(Asn) or Gln-tRNA(Gln) through the transamidation of misacylated Asp-tRNA(Asn) or Glu-tRNA(Gln) in organisms which lack either or both of asparaginyl-tRNA or glutaminyl-tRNA synthetases. The reaction takes place in the presence of glutamine and ATP through an activated phospho-Asp-tRNA(Asn) or phospho-Glu-tRNA(Gln). In Brucella anthropi (strain ATCC 49188 / DSM 6882 / CCUG 24695 / JCM 21032 / LMG 3331 / NBRC 15819 / NCTC 12168 / Alc 37) (Ochrobactrum anthropi), this protein is Aspartyl/glutamyl-tRNA(Asn/Gln) amidotransferase subunit B.